Consider the following 146-residue polypeptide: Large ribosomal subunit protein uL15 (146 aa).

The tract at residues 1–57 (MDLSNLKAAEGSVHSDNFRRGRGHGSGNGKTAGKGHKGQKARSGAPRPGFEGGQMPL) is disordered.

This sequence belongs to the universal ribosomal protein uL15 family. In terms of assembly, part of the 50S ribosomal subunit.

In terms of biological role, binds to the 23S rRNA. The protein is Large ribosomal subunit protein uL15 of Agathobacter rectalis (strain ATCC 33656 / DSM 3377 / JCM 17463 / KCTC 5835 / VPI 0990) (Eubacterium rectale).